Reading from the N-terminus, the 217-residue chain is Cytochrome c biogenesis ATP-binding export protein CcmA (217 aa).

In terms of domain architecture, ABC transporter spans 6–216; the sequence is LQLEQLACQR…QYKFFDQGNM (211 aa). Residue 38 to 45 coordinates ATP; that stretch reads GHNGIGKT.

Belongs to the ABC transporter superfamily. CcmA exporter (TC 3.A.1.107) family. In terms of assembly, the complex is composed of two ATP-binding proteins (CcmA) and two transmembrane proteins (CcmB).

The protein localises to the cell inner membrane. It catalyses the reaction heme b(in) + ATP + H2O = heme b(out) + ADP + phosphate + H(+). Part of the ABC transporter complex CcmAB involved in the biogenesis of c-type cytochromes; once thought to export heme, this seems not to be the case, but its exact role is uncertain. Responsible for energy coupling to the transport system. The sequence is that of Cytochrome c biogenesis ATP-binding export protein CcmA from Histophilus somni (strain 129Pt) (Haemophilus somnus).